The primary structure comprises 220 residues: Ribonuclease HII (220 aa).

The RNase H type-2 domain occupies 32–220 (KHIAGIDEAG…FAPIKGRFDC (189 aa)). A divalent metal cation is bound by residues D38, E39, and D130.

The protein belongs to the RNase HII family. Mn(2+) is required as a cofactor. Mg(2+) serves as cofactor.

The protein localises to the cytoplasm. The enzyme catalyses Endonucleolytic cleavage to 5'-phosphomonoester.. In terms of biological role, endonuclease that specifically degrades the RNA of RNA-DNA hybrids. This is Ribonuclease HII from Brucella canis (strain ATCC 23365 / NCTC 10854 / RM-666).